The chain runs to 415 residues: Coenzyme F420 hydrogenase subunit alpha (415 aa).

Ni(2+) is bound by residues Cys-68, Cys-71, Cys-391, and Cys-394.

This sequence belongs to the [NiFe]/[NiFeSe] hydrogenase large subunit family. In terms of assembly, heterocomplex of the form (alpha(1)beta(1)gamma(1))(8). The cofactor is Ni(2+). It depends on iron-sulfur cluster as a cofactor. Requires FAD as cofactor.

It catalyses the reaction oxidized coenzyme F420-(gamma-L-Glu)(n) + H2 + H(+) = reduced coenzyme F420-(gamma-L-Glu)(n). In terms of biological role, reduces the physiological low-potential two-electron acceptor coenzyme F420, and the artificial one-electron acceptor methylviologen. This chain is Coenzyme F420 hydrogenase subunit alpha (frhA), found in Methanocaldococcus jannaschii (strain ATCC 43067 / DSM 2661 / JAL-1 / JCM 10045 / NBRC 100440) (Methanococcus jannaschii).